A 316-amino-acid chain; its full sequence is Small ribosomal subunit protein RACK1 (316 aa).

WD repeat units follow at residues 4–46 (QMTL…WRLT), 52–93 (YGVP…WDLS), 94–135 (TGQT…WNTL), 137–180 (VCKY…WNLT), 181–221 (NCKL…LWDL), 222–263 (NEGK…WDLE), and 264–312 (GKVV…WQVS).

Belongs to the WD repeat G protein beta family. Ribosomal protein RACK1 subfamily.

This chain is Small ribosomal subunit protein RACK1, found in Biomphalaria glabrata (Bloodfluke planorb).